A 471-amino-acid polypeptide reads, in one-letter code: Glutamate--tRNA ligase 1 (471 aa).

Residues 15–25 (PSPTGYLHIGG) carry the 'HIGH' region motif. A 'KMSKS' region motif is present at residues 243–247 (KLSKR). K246 contacts ATP.

The protein belongs to the class-I aminoacyl-tRNA synthetase family. Glutamate--tRNA ligase type 1 subfamily. Monomer.

Its subcellular location is the cytoplasm. It carries out the reaction tRNA(Glu) + L-glutamate + ATP = L-glutamyl-tRNA(Glu) + AMP + diphosphate. Functionally, catalyzes the attachment of glutamate to tRNA(Glu) in a two-step reaction: glutamate is first activated by ATP to form Glu-AMP and then transferred to the acceptor end of tRNA(Glu). The chain is Glutamate--tRNA ligase 1 from Cereibacter sphaeroides (strain ATCC 17023 / DSM 158 / JCM 6121 / CCUG 31486 / LMG 2827 / NBRC 12203 / NCIMB 8253 / ATH 2.4.1.) (Rhodobacter sphaeroides).